The primary structure comprises 904 residues: Protein translocase subunit SecA (904 aa).

Residues Gln89, 107–111 (GEGKT), and Asp502 contribute to the ATP site. Residues 872–892 (VESDPTTWGEPSRNDPCPCGS) are disordered. Positions 888, 890, 899, and 900 each coordinate Zn(2+).

Belongs to the SecA family. In terms of assembly, part of the essential protein translocation apparatus which comprises SecA, SecYEG and auxiliary proteins SecDF-YajC and YidC. Homodimer. Zn(2+) serves as cofactor.

Its subcellular location is the cell inner membrane. The protein resides in the cytoplasm. The enzyme catalyses ATP + H2O + cellular proteinSide 1 = ADP + phosphate + cellular proteinSide 2.. Functionally, part of the Sec protein translocase complex. Interacts with the SecYEG preprotein conducting channel. Has a central role in coupling the hydrolysis of ATP to the transfer of proteins into and across the cell membrane, serving both as a receptor for the preprotein-SecB complex and as an ATP-driven molecular motor driving the stepwise translocation of polypeptide chains across the membrane. The polypeptide is Protein translocase subunit SecA (Rhodobacter capsulatus (Rhodopseudomonas capsulata)).